A 410-amino-acid polypeptide reads, in one-letter code: 3-phosphoshikimate 1-carboxyvinyltransferase (410 aa).

3-phosphoshikimate is bound by residues Lys21, Ser22, and Arg26. Position 21 (Lys21) interacts with phosphoenolpyruvate. Phosphoenolpyruvate is bound by residues Gly69 and Arg97. Ser143, Ser144, Gln145, Ser171, Asp288, and Lys315 together coordinate 3-phosphoshikimate. Phosphoenolpyruvate is bound at residue Gln145. The active-site Proton acceptor is Asp288. 3 residues coordinate phosphoenolpyruvate: Arg319, Arg364, and Lys389.

Belongs to the EPSP synthase family. As to quaternary structure, monomer.

The protein resides in the cytoplasm. It catalyses the reaction 3-phosphoshikimate + phosphoenolpyruvate = 5-O-(1-carboxyvinyl)-3-phosphoshikimate + phosphate. The protein operates within metabolic intermediate biosynthesis; chorismate biosynthesis; chorismate from D-erythrose 4-phosphate and phosphoenolpyruvate: step 6/7. Catalyzes the transfer of the enolpyruvyl moiety of phosphoenolpyruvate (PEP) to the 5-hydroxyl of shikimate-3-phosphate (S3P) to produce enolpyruvyl shikimate-3-phosphate and inorganic phosphate. This Bacteroides fragilis (strain YCH46) protein is 3-phosphoshikimate 1-carboxyvinyltransferase.